Consider the following 103-residue polypeptide: N(4)-acetylcytidine amidohydrolase (103 aa).

The region spanning 7–93 is the ASCH domain; it reads TFFERFEQDI…VIAEIYPGLE (87 aa). Lys21 (proton acceptor) is an active-site residue. The active-site Nucleophile is the Thr24. Residue Glu74 is the Proton donor of the active site.

The protein belongs to the N(4)-acetylcytidine amidohydrolase family.

It carries out the reaction N(4)-acetylcytidine + H2O = cytidine + acetate + H(+). It catalyses the reaction N(4)-acetyl-2'-deoxycytidine + H2O = 2'-deoxycytidine + acetate + H(+). The catalysed reaction is N(4)-acetylcytosine + H2O = cytosine + acetate + H(+). Its function is as follows. Catalyzes the hydrolysis of N(4)-acetylcytidine (ac4C). The protein is N(4)-acetylcytidine amidohydrolase of Shewanella putrefaciens (strain CN-32 / ATCC BAA-453).